The following is a 182-amino-acid chain: Flavodoxin (182 aa).

Positions 4-173 (IGLFFGSDTG…RLKGWLSLIA (170 aa)) constitute a Flavodoxin-like domain.

This sequence belongs to the flavodoxin family. FMN is required as a cofactor.

Functionally, low-potential electron donor to a number of redox enzymes. NifF is the electron donor to nitrogenase. This chain is Flavodoxin (nifF), found in Rhodobacter capsulatus (strain ATCC BAA-309 / NBRC 16581 / SB1003).